Here is a 485-residue protein sequence, read N- to C-terminus: Glutamyl-tRNA(Gln) amidotransferase subunit A (485 aa).

Residues Lys-78 and Ser-153 each act as charge relay system in the active site. Ser-177 serves as the catalytic Acyl-ester intermediate.

This sequence belongs to the amidase family. GatA subfamily. As to quaternary structure, heterotrimer of A, B and C subunits.

The enzyme catalyses L-glutamyl-tRNA(Gln) + L-glutamine + ATP + H2O = L-glutaminyl-tRNA(Gln) + L-glutamate + ADP + phosphate + H(+). Allows the formation of correctly charged Gln-tRNA(Gln) through the transamidation of misacylated Glu-tRNA(Gln) in organisms which lack glutaminyl-tRNA synthetase. The reaction takes place in the presence of glutamine and ATP through an activated gamma-phospho-Glu-tRNA(Gln). The sequence is that of Glutamyl-tRNA(Gln) amidotransferase subunit A from Bacillus cereus (strain ATCC 10987 / NRS 248).